Reading from the N-terminus, the 84-residue chain is Small ribosomal subunit protein uS17 (84 aa).

This sequence belongs to the universal ribosomal protein uS17 family. In terms of assembly, part of the 30S ribosomal subunit.

Functionally, one of the primary rRNA binding proteins, it binds specifically to the 5'-end of 16S ribosomal RNA. This Alkaliphilus oremlandii (strain OhILAs) (Clostridium oremlandii (strain OhILAs)) protein is Small ribosomal subunit protein uS17.